The chain runs to 536 residues: Heparanase (536 aa).

Positions 1-28 (MLRPLLLLWLWGRLGALTQGTPAGTAPT) are cleaved as a signal peptide. Heparan sulfate group-binding positions include 55–57 (DAS) and Thr90. The propeptide at 103–150 (PTSEERSYWQSQDNNDICGSERVSADVLRKLQMEWPFQELLLLREQYQ) is linker peptide. Cys120 and Cys172 are oxidised to a cystine. A heparan sulfate group-binding site is contributed by 151-155 (REFKN). Asn155, Asn193, and Asn210 each carry an N-linked (GlcNAc...) asparagine glycan. Catalysis depends on Glu218, which acts as the Proton donor. Heparan sulfate group-binding positions include 263-273 (QPRGKTVKLLR), His289, and Arg296. The interval 281 to 410 (EVIDSLTWHH…LLFKKLVGPK (130 aa)) is required for heterodimerization with the heparanase 8 kDa subunit. Glu336 functions as the Nucleophile in the catalytic mechanism. Heparan sulfate group is bound by residues 341-343 (YGG) and 382-384 (GNY). Residues Cys430 and Cys535 are joined by a disulfide bond. N-linked (GlcNAc...) asparagine glycosylation occurs at Asn452. Positions 520–536 (FSYGFFVIRNAKIAACI) are required for transferring proheparanase to the Golgi apparatus, secretion and subsequent enzyme activity and for enhancement of PKB/AKT1 phosphorylation.

It belongs to the glycosyl hydrolase 79 family. In terms of assembly, heterodimer; heterodimer formation between the 8 kDa and the 50 kDa subunits is required for enzyme activity. Interacts with TF; the interaction, inhibited by heparin, enhances the generation of activated factor X and activates coagulation. Interacts with HRG; the interaction is enhanced at acidic pH, partially inhibits binding of HPSE to cell surface receptors and modulates its enzymatic activity. Interacts with SDC1; the interaction enhances the shedding of SDC1. Interacts with HPSE2. In terms of processing, proteolytically processed. The cleavage of the 65 kDa form leads to the generation of a linker peptide, and the 8 kDa and 50 kDa products. The active form, the 8/50 kDa heterodimer, is resistant to degradation. Complete removal of the linker peptide appears to be a prerequisite to the complete activation of the enzyme. N-glycosylated. Glycosylation of the 50 kDa subunit appears to be essential for its solubility.

The protein localises to the lysosome membrane. It localises to the secreted. The protein resides in the nucleus. It carries out the reaction endohydrolysis of (1-&gt;4)-beta-D-glycosidic bonds of heparan sulfate chains in heparan sulfate proteoglycan.. With respect to regulation, inhibited by laminarin sulfate and, to a lower extent, by heparin and sulfamin. Activated by calcium and magnesium. Inhibited by EDTA. Functionally, endoglycosidase that cleaves heparan sulfate proteoglycans (HSPGs) into heparan sulfate side chains and core proteoglycans. Participates in extracellular matrix (ECM) degradation and remodeling. Selectively cleaves the linkage between a glucuronic acid unit and an N-sulfo glucosamine unit carrying either a 3-O-sulfo or a 6-O-sulfo group. Can also cleave the linkage between a glucuronic acid unit and an N-sulfo glucosamine unit carrying a 2-O-sulfo group, but not linkages between a glucuronic acid unit and a 2-O-sulfated iduronic acid moiety. It is essentially inactive at neutral pH but becomes active under acidic conditions such as during tumor invasion and in inflammatory processes. Facilitates cell migration associated with metastasis, wound healing and inflammation. Enhances shedding of syndecans, and increases endothelial invasion and angiogenesis in myelomas. Acts as a procoagulant by increasing the generation of activation factor X in the presence of tissue factor and activation factor VII. Increases cell adhesion to the extracellular matrix (ECM), independent of its enzymatic activity. Induces AKT1/PKB phosphorylation via lipid rafts increasing cell mobility and invasion. Heparin increases this AKT1/PKB activation. Regulates osteogenesis. Enhances angiogenesis through up-regulation of SRC-mediated activation of VEGF. Implicated in hair follicle inner root sheath differentiation and hair homeostasis. The polypeptide is Heparanase (Hpse) (Rattus norvegicus (Rat)).